A 362-amino-acid polypeptide reads, in one-letter code: Phosphoserine aminotransferase (362 aa).

Residues S9 and R42 each contribute to the L-glutamate site. Pyridoxal 5'-phosphate-binding positions include 76–77, W102, T153, D174, and Q197; that span reads GR. An N6-(pyridoxal phosphate)lysine modification is found at K198. 239 to 240 contacts pyridoxal 5'-phosphate; it reads NT.

The protein belongs to the class-V pyridoxal-phosphate-dependent aminotransferase family. SerC subfamily. In terms of assembly, homodimer. Requires pyridoxal 5'-phosphate as cofactor.

It localises to the cytoplasm. The catalysed reaction is O-phospho-L-serine + 2-oxoglutarate = 3-phosphooxypyruvate + L-glutamate. It catalyses the reaction 4-(phosphooxy)-L-threonine + 2-oxoglutarate = (R)-3-hydroxy-2-oxo-4-phosphooxybutanoate + L-glutamate. It participates in amino-acid biosynthesis; L-serine biosynthesis; L-serine from 3-phospho-D-glycerate: step 2/3. The protein operates within cofactor biosynthesis; pyridoxine 5'-phosphate biosynthesis; pyridoxine 5'-phosphate from D-erythrose 4-phosphate: step 3/5. Its function is as follows. Catalyzes the reversible conversion of 3-phosphohydroxypyruvate to phosphoserine and of 3-hydroxy-2-oxo-4-phosphonooxybutanoate to phosphohydroxythreonine. The sequence is that of Phosphoserine aminotransferase from Escherichia coli O1:K1 / APEC.